Reading from the N-terminus, the 466-residue chain is Glycosyl hydrolase family 109 protein (466 aa).

The segment at residues 1-30 is a signal peptide (tat-type signal); that stretch reads MENTRRSFLKKVSAAGIGAAGLAMAGNAGA. NAD(+)-binding positions include 59–60, Asp-81, 130–133, 151–152, and Asn-180; these read SR, WEWH, and EV. Tyr-209 is a substrate binding site. Residue 241 to 245 coordinates NAD(+); it reads AEAQW. Residues Arg-246, 258–261, and Tyr-340 each bind substrate; that span reads YPTH. Tyr-258 is a binding site for NAD(+).

This sequence belongs to the Gfo/Idh/MocA family. Glycosyl hydrolase 109 subfamily. NAD(+) is required as a cofactor. Predicted to be exported by the Tat system. The position of the signal peptide cleavage has not been experimentally proven.

Glycosidase. The sequence is that of Glycosyl hydrolase family 109 protein from Parabacteroides distasonis (strain ATCC 8503 / DSM 20701 / CIP 104284 / JCM 5825 / NCTC 11152).